The primary structure comprises 456 residues: Bifunctional protein GlmU (456 aa).

Residues 1-229 (MLNNAMSVVI…LSEVEGVNNR (229 aa)) form a pyrophosphorylase region. UDP-N-acetyl-alpha-D-glucosamine contacts are provided by residues 11–14 (LAAG), Lys25, Gln76, 81–82 (GT), 103–105 (YGD), Gly140, Glu154, Asn169, and Asn227. A Mg(2+)-binding site is contributed by Asp105. Asn227 is a binding site for Mg(2+). Residues 230–250 (LQLSRLERVYQSEQAEKLLLA) are linker. The segment at 251–456 (GVMLRDPARF…EGWRRPVKKK (206 aa)) is N-acetyltransferase. Arg333 and Lys351 together coordinate UDP-N-acetyl-alpha-D-glucosamine. His363 serves as the catalytic Proton acceptor. UDP-N-acetyl-alpha-D-glucosamine-binding residues include Tyr366 and Asn377. Acetyl-CoA contacts are provided by residues Ala380, 386-387 (NY), Ser405, Ala423, and Arg440.

In the N-terminal section; belongs to the N-acetylglucosamine-1-phosphate uridyltransferase family. It in the C-terminal section; belongs to the transferase hexapeptide repeat family. Homotrimer. Mg(2+) is required as a cofactor.

The protein localises to the cytoplasm. The enzyme catalyses alpha-D-glucosamine 1-phosphate + acetyl-CoA = N-acetyl-alpha-D-glucosamine 1-phosphate + CoA + H(+). It carries out the reaction N-acetyl-alpha-D-glucosamine 1-phosphate + UTP + H(+) = UDP-N-acetyl-alpha-D-glucosamine + diphosphate. Its pathway is nucleotide-sugar biosynthesis; UDP-N-acetyl-alpha-D-glucosamine biosynthesis; N-acetyl-alpha-D-glucosamine 1-phosphate from alpha-D-glucosamine 6-phosphate (route II): step 2/2. It participates in nucleotide-sugar biosynthesis; UDP-N-acetyl-alpha-D-glucosamine biosynthesis; UDP-N-acetyl-alpha-D-glucosamine from N-acetyl-alpha-D-glucosamine 1-phosphate: step 1/1. It functions in the pathway bacterial outer membrane biogenesis; LPS lipid A biosynthesis. Functionally, catalyzes the last two sequential reactions in the de novo biosynthetic pathway for UDP-N-acetylglucosamine (UDP-GlcNAc). The C-terminal domain catalyzes the transfer of acetyl group from acetyl coenzyme A to glucosamine-1-phosphate (GlcN-1-P) to produce N-acetylglucosamine-1-phosphate (GlcNAc-1-P), which is converted into UDP-GlcNAc by the transfer of uridine 5-monophosphate (from uridine 5-triphosphate), a reaction catalyzed by the N-terminal domain. The chain is Bifunctional protein GlmU from Shigella sonnei (strain Ss046).